Here is a 427-residue protein sequence, read N- to C-terminus: Peptidase B (427 aa).

Mn(2+) is bound by residues Lys195 and Asp200. The active site involves Lys207. Mn(2+) contacts are provided by Asp218, Asp277, and Glu279. The active site involves Arg281.

It belongs to the peptidase M17 family. Homohexamer. The cofactor is Mn(2+).

The protein resides in the cytoplasm. The catalysed reaction is Release of an N-terminal amino acid, Xaa, from a peptide or arylamide. Xaa is preferably Glu or Asp but may be other amino acids, including Leu, Met, His, Cys and Gln.. Functionally, probably plays an important role in intracellular peptide degradation. This Salmonella typhi protein is Peptidase B.